The following is a 126-amino-acid chain: Small ribosomal subunit protein uS12 (126 aa).

The interval M1–D26 is disordered. Residue D89 is modified to 3-methylthioaspartic acid. The interval D103 to K126 is disordered. A compositionally biased stretch (basic residues) spans A113–K126.

The protein belongs to the universal ribosomal protein uS12 family. Part of the 30S ribosomal subunit. Contacts proteins S8 and S17. May interact with IF1 in the 30S initiation complex.

Functionally, with S4 and S5 plays an important role in translational accuracy. Interacts with and stabilizes bases of the 16S rRNA that are involved in tRNA selection in the A site and with the mRNA backbone. Located at the interface of the 30S and 50S subunits, it traverses the body of the 30S subunit contacting proteins on the other side and probably holding the rRNA structure together. The combined cluster of proteins S8, S12 and S17 appears to hold together the shoulder and platform of the 30S subunit. The sequence is that of Small ribosomal subunit protein uS12 from Paraburkholderia xenovorans (strain LB400).